An 80-amino-acid polypeptide reads, in one-letter code: Large ribosomal subunit protein uL24 (80 aa).

The disordered stretch occupies residues 53–80 (HMRPTQGQTQGSIIEREFPIHSSNVKKS).

Belongs to the universal ribosomal protein uL24 family. As to quaternary structure, part of the 50S ribosomal subunit.

One of two assembly initiator proteins, it binds directly to the 5'-end of the 23S rRNA, where it nucleates assembly of the 50S subunit. In terms of biological role, one of the proteins that surrounds the polypeptide exit tunnel on the outside of the subunit. The polypeptide is Large ribosomal subunit protein uL24 (Pelodictyon phaeoclathratiforme (strain DSM 5477 / BU-1)).